Consider the following 409-residue polypeptide: SPI-1 type 3 secretion system translocon protein SctB (409 aa).

Residues 119–140 traverse the membrane as a helical segment; sequence ISGMSSSAVALLAAANTLMLTL.

It belongs to the SctB/SipC family. In terms of assembly, the core secretion machinery of the T3SS is composed of approximately 20 different proteins, including cytoplasmic components, a base, an export apparatus and a needle. This subunit is involved in the formation of a pore, called the translocon, in host membrane.

It is found in the secreted. It localises to the host membrane. Component of the type III secretion system 1 (SPI-1 T3SS), also called injectisome, which is used to inject bacterial effector proteins into eukaryotic host cells. SipB/SctE1 and SipC/SctB1 are inserted into the host membrane where they form a pore and allow the translocation of effector proteins into the cytosol of target cells. This is SPI-1 type 3 secretion system translocon protein SctB from Salmonella typhimurium (strain 14028s / SGSC 2262).